The following is a 908-amino-acid chain: Chloride channel protein 2 (908 aa).

The Cytoplasmic portion of the chain corresponds to 1–95; the sequence is MAAATAAAAA…RCHKFLVSRV (95 aa). Residues 24-42 are essential for channel gating by both voltage and cell volume; it reads QYEQTLMYGRYTQELGAFA. Residue threonine 28 is modified to Phosphothreonine. Residues 44–57 are modulates channel gating by both voltage and cell volume; that stretch reads EEAARIRLGGPEPW. 2 helical membrane-spanning segments follow: residues 96-129 and 138-163; these read GEDW…AQQW and ILLQ…TQIL. The short motif at 169–173 is the Selectivity filter part_1 element; it reads GSGIP. Serine 170 serves as a coordination point for chloride. Positions 172–179 form an intramembrane region, helical; it reads IPEMKTIL. 2 consecutive transmembrane segments (helical) span residues 188-206 and 213-231; these read LTLK…ALGS and EGPF…SKFL. Positions 211–215 match the Selectivity filter part_2 motif; the sequence is GKEGP. 2 consecutive intramembrane regions (helical) follow at residues 247–259 and 263–271; these read MLAA…VGCC and PIGGVLFSI. Transmembrane regions (helical) follow at residues 283–303, 329–357, 366–385, 437–457, and 465–488; these read YWRG…LAVW, LPAF…VQVM, FLMR…ISTL, ANVF…SALA, and GAFM…MAAW. A Selectivity filter part_3 motif is present at residues 465 to 469; the sequence is GAFMP. Phenylalanine 467 provides a ligand contact to chloride. The helical intramembrane region spans 505–519; that stretch reads GGYAVVGAAALAGAV. The segment at residues 520–521 is an intramembrane region (note=Loop between two helices); the sequence is TH. Positions 522–533 form an intramembrane region, helical; sequence TVSTAVIVFELT. The note=Loop between two helices intramembrane region spans 534–538; that stretch reads GQIAH. A helical membrane pass occupies residues 539–556; it reads ILPVMIAVILANAVAQSL. Topologically, residues 557-908 are cytoplasmic; sequence QPSLYDSIIR…TPSDSDDKCQ (352 aa). Tyrosine 561 serves as a coordination point for chloride. Residues 592-650 enclose the CBS 1 domain; that stretch reads MVRDVPHVALSCTFRDLRLALHRTKGRMLALVESPESMILLGSIERSQVVALLGAQLSP. The span at 653-662 shows a compositional bias: basic residues; the sequence is RRQHMQKLRK. A disordered region spans residues 653–722; that stretch reads RRQHMQKLRK…NSTSLQEGTT (70 aa). Positions 666 to 680 are enriched in low complexity; that stretch reads SPPSDQESPPSSETS. Residues 681–690 show a composition bias toward polar residues; the sequence is IRFQVNTEDS. Residues 698–707 show a composition bias toward basic residues; sequence QTHKPLKPAL. Over residues 711–722 the composition is skewed to polar residues; that stretch reads PSNSTSLQEGTT. Serine 768 is modified (phosphoserine). The CBS 2 domain maps to 800-860; the sequence is IDPAPFQLVE…GSVTAQGVKV (61 aa). A Basolateral membrane sorting motif is present at residues 822 to 823; that stretch reads LL. The tract at residues 866–908 is disordered; the sequence is SFRDSATSSSDTETTEVHALWGPRSRHGLPREGTPSDSDDKCQ.

This sequence belongs to the chloride channel (TC 2.A.49) family. ClC-2/CLCN2 subfamily. As to quaternary structure, homodimer. Interacts with auxiliary subunit HEPACAM. Phosphorylated. Activated by dephosphorylation. In terms of tissue distribution, expressed in the adrenal gland and brain. Expressed in intestinal epithelium (at protein level). Expressed in salivary gland (at protein level).

The protein localises to the cell membrane. The protein resides in the myelin membrane. It localises to the basolateral cell membrane. Its subcellular location is the cell projection. It is found in the dendritic spine membrane. The protein localises to the axon. It carries out the reaction chloride(in) = chloride(out). The enzyme catalyses thiocyanate(in) = thiocyanate(out). The catalysed reaction is bromide(in) = bromide(out). It catalyses the reaction nitrate(in) = nitrate(out). It carries out the reaction iodide(out) = iodide(in). With respect to regulation, common gate kinetics are down-regulated by intracellular ATP. Inhibited by AK-42, a derivative of meclofenamate. Inhibited by Cd(2+). Inhibited by Zn(2+) and PKC activation. Inhibited at acidic pH. CCLN2:HEPACAM channel conductance is up-regulated upon hypo-osmolarity. Voltage-gated and osmosensitive chloride channel. Forms a homodimeric channel where each subunit has its own ion conduction pathway. Conducts double-barreled currents controlled by two types of gates, two fast glutamate gates that control each subunit independently and a slow common gate that opens and shuts off both subunits simultaneously. Displays inward rectification currents activated upon membrane hyperpolarization and extracellular hypotonicity. Contributes to chloride conductance involved in neuron excitability. In hippocampal neurons, generates a significant part of resting membrane conductance and provides an additional chloride efflux pathway to prevent chloride accumulation in dendrites upon GABA receptor activation. In glia, associates with the auxiliary subunit HEPACAM/GlialCAM at astrocytic processes and myelinated fiber tracts where it may regulate transcellular chloride flux buffering extracellular chloride and potassium concentrations. Regulates aldosterone production in adrenal glands. The opening of CLCN2 channels at hyperpolarized membrane potentials in the glomerulosa causes cell membrane depolarization, activation of voltage-gated calcium channels and increased expression of aldosterone synthase, the rate-limiting enzyme for aldosterone biosynthesis. Contributes to chloride conductance in retinal pigment epithelium involved in phagocytosis of shed photoreceptor outer segments and photoreceptor renewal. Conducts chloride currents at the basolateral membrane of epithelial cells with a role in chloride reabsorption rather than secretion. Permeable to small monovalent anions with chloride &gt; thiocyanate &gt; bromide &gt; nitrate &gt; iodide ion selectivity. This chain is Chloride channel protein 2 (Clcn2), found in Mus musculus (Mouse).